The following is a 397-amino-acid chain: Acetyl-CoA acetyltransferase, cytosolic (397 aa).

Position 1 is an N-acetylmethionine (methionine 1). The active-site Acyl-thioester intermediate is the cysteine 92. The residue at position 200 (lysine 200) is an N6-acetyllysine. 2 residues coordinate CoA: arginine 223 and serine 226. Lysine 233 and lysine 235 each carry N6-acetyllysine. Serine 252 contributes to the CoA binding site. Catalysis depends on cysteine 383, which acts as the Proton donor/acceptor.

It belongs to the thiolase-like superfamily. Thiolase family. Homotetramer.

It is found in the cytoplasm. It localises to the cytosol. It carries out the reaction 2 acetyl-CoA = acetoacetyl-CoA + CoA. Its pathway is lipid metabolism; fatty acid metabolism. Its function is as follows. Involved in the biosynthetic pathway of cholesterol. The polypeptide is Acetyl-CoA acetyltransferase, cytosolic (ACAT2) (Homo sapiens (Human)).